Consider the following 313-residue polypeptide: Pyrimidine-specific ribonucleoside hydrolase RihA (313 aa).

The active site involves histidine 240.

It belongs to the IUNH family. RihA subfamily.

Functionally, hydrolyzes cytidine or uridine to ribose and cytosine or uracil, respectively. This is Pyrimidine-specific ribonucleoside hydrolase RihA from Enterobacter sp. (strain 638).